The chain runs to 469 residues: Arginine biosynthesis bifunctional protein ArgJ, mitochondrial (469 aa).

Residues T199, K228, T239, E325, N464, and T469 each coordinate substrate. The active-site Nucleophile is T239.

It belongs to the ArgJ family. In terms of assembly, heterodimer of an alpha and a beta chain. In terms of processing, the alpha and beta chains are autoproteolytically processed from a single precursor protein within the mitochondrion.

It is found in the mitochondrion matrix. It catalyses the reaction N(2)-acetyl-L-ornithine + L-glutamate = N-acetyl-L-glutamate + L-ornithine. It carries out the reaction L-glutamate + acetyl-CoA = N-acetyl-L-glutamate + CoA + H(+). It participates in amino-acid biosynthesis; L-arginine biosynthesis; L-ornithine and N-acetyl-L-glutamate from L-glutamate and N(2)-acetyl-L-ornithine (cyclic): step 1/1. It functions in the pathway amino-acid biosynthesis; L-arginine biosynthesis; N(2)-acetyl-L-ornithine from L-glutamate: step 1/4. Its function is as follows. Catalyzes two activities which are involved in the cyclic version of arginine biosynthesis: the synthesis of acetylglutamate from glutamate and acetyl-CoA, and of ornithine by transacetylation between acetylornithine and glutamate. In Neurospora crassa (strain ATCC 24698 / 74-OR23-1A / CBS 708.71 / DSM 1257 / FGSC 987), this protein is Arginine biosynthesis bifunctional protein ArgJ, mitochondrial.